The chain runs to 172 residues: Small ribosomal subunit protein uS13c (172 aa).

The N-terminal 47 residues, 1–47 (MAHTLATPVAPSVSLICNTKLSVSLSSSSLAFRPVNPKNGGGLSIKC), are a transit peptide targeting the chloroplast.

As to quaternary structure, component of the chloroplast small ribosomal subunit (SSU). Mature 70S chloroplast ribosomes of higher plants consist of a small (30S) and a large (50S) subunit. The 30S small subunit contains 1 molecule of ribosomal RNA (16S rRNA) and 24 different proteins. The 50S large subunit contains 3 rRNA molecules (23S, 5S and 4.5S rRNA) and 33 different proteins. uS13c interacts with translation factor pY (PSRP1).

It localises to the plastid. The protein resides in the chloroplast. In terms of biological role, component of the chloroplast ribosome (chloro-ribosome), a dedicated translation machinery responsible for the synthesis of chloroplast genome-encoded proteins, including proteins of the transcription and translation machinery and components of the photosynthetic apparatus. The polypeptide is Small ribosomal subunit protein uS13c (RPS13) (Spinacia oleracea (Spinach)).